An 81-amino-acid chain; its full sequence is Cytotoxin 3b (81 aa).

The N-terminal stretch at 1–21 (MKTLLLTLVVVTIVCLDLGYT) is a signal peptide. Disulfide bonds link C24–C42, C35–C59, C63–C74, and C75–C80.

This sequence belongs to the three-finger toxin family. Short-chain subfamily. Type IA cytotoxin sub-subfamily. In terms of assembly, monomer in solution; Homodimer and oligomer in the presence of negatively charged lipids forming a pore with a size ranging between 20 and 30 Angstroms. As to expression, expressed by the venom gland.

The protein localises to the secreted. Its subcellular location is the target cell membrane. Functionally, shows cytolytic activity on many different cells by forming pore in lipid membranes. In vivo, increases heart rate or kills the animal by cardiac arrest. In addition, it binds to heparin with high affinity, interacts with Kv channel-interacting protein 1 (KCNIP1) in a calcium-independent manner, and binds to integrin alpha-V/beta-3 (ITGAV/ITGB3) with moderate affinity. This chain is Cytotoxin 3b, found in Naja atra (Chinese cobra).